The following is a 307-amino-acid chain: 4-diphosphocytidyl-2-C-methyl-D-erythritol kinase (307 aa).

Lys-9 is an active-site residue. Position 94–104 (94–104 (PIGAGLAGGSS)) interacts with ATP. The active site involves Asp-136.

The protein belongs to the GHMP kinase family. IspE subfamily.

The enzyme catalyses 4-CDP-2-C-methyl-D-erythritol + ATP = 4-CDP-2-C-methyl-D-erythritol 2-phosphate + ADP + H(+). The protein operates within isoprenoid biosynthesis; isopentenyl diphosphate biosynthesis via DXP pathway; isopentenyl diphosphate from 1-deoxy-D-xylulose 5-phosphate: step 3/6. Functionally, catalyzes the phosphorylation of the position 2 hydroxy group of 4-diphosphocytidyl-2C-methyl-D-erythritol. The chain is 4-diphosphocytidyl-2-C-methyl-D-erythritol kinase from Synechococcus sp. (strain CC9902).